The chain runs to 605 residues: Elongation factor 4 (605 aa).

The region spanning 9-192 (GMIRNFCIIA…AIVARVPAPA (184 aa)) is the tr-type G domain. GTP is bound by residues 21 to 26 (DHGKST) and 139 to 142 (NKID).

Belongs to the TRAFAC class translation factor GTPase superfamily. Classic translation factor GTPase family. LepA subfamily.

The protein resides in the cell inner membrane. It catalyses the reaction GTP + H2O = GDP + phosphate + H(+). Functionally, required for accurate and efficient protein synthesis under certain stress conditions. May act as a fidelity factor of the translation reaction, by catalyzing a one-codon backward translocation of tRNAs on improperly translocated ribosomes. Back-translocation proceeds from a post-translocation (POST) complex to a pre-translocation (PRE) complex, thus giving elongation factor G a second chance to translocate the tRNAs correctly. Binds to ribosomes in a GTP-dependent manner. In Chlorobaculum tepidum (strain ATCC 49652 / DSM 12025 / NBRC 103806 / TLS) (Chlorobium tepidum), this protein is Elongation factor 4.